A 197-amino-acid chain; its full sequence is Guanylate kinase (197 aa).

Residues 9 to 188 (GRLVVFSAPS…AVEAVILAIS (180 aa)) enclose the Guanylate kinase-like domain. ATP is bound at residue 16 to 23 (APSGTGKS).

This sequence belongs to the guanylate kinase family.

It is found in the cytoplasm. The catalysed reaction is GMP + ATP = GDP + ADP. In terms of biological role, essential for recycling GMP and indirectly, cGMP. This is Guanylate kinase from Chlorobium luteolum (strain DSM 273 / BCRC 81028 / 2530) (Pelodictyon luteolum).